A 449-amino-acid polypeptide reads, in one-letter code: Sensor protein QseC (449 aa).

Residues 1-12 (MKLTQRLSLRVR) are Cytoplasmic-facing. A helical transmembrane segment spans residues 13-33 (LTLIFLILVSITWAISSFVAW). Residues 34–161 (RKTTDNVDEL…REDMALAIVA (128 aa)) are Periplasmic-facing. A helical membrane pass occupies residues 162–182 (AQLTPWLIALPFMLLILLLLL). An HAMP domain is found at 183 to 235 (HRELRPLKKLAQALRFRSPESETPLDAKGVPSEVRPLVEALNQLFSRIHSMMV). Residues 183-449 (HRELRPLKKL…EGGFEAVVSW (267 aa)) lie on the Cytoplasmic side of the membrane. The Histidine kinase domain occupies 243–449 (DAAHELRSPL…EGGFEAVVSW (207 aa)). Histidine 246 carries the post-translational modification Phosphohistidine; by autocatalysis.

It localises to the cell inner membrane. It catalyses the reaction ATP + protein L-histidine = ADP + protein N-phospho-L-histidine.. Its function is as follows. Member of a two-component regulatory system QseB/QseC. Activates the flagella regulon by activating transcription of FlhDC. May activate QseB by phosphorylation. The protein is Sensor protein QseC (qseC) of Salmonella typhimurium (strain LT2 / SGSC1412 / ATCC 700720).